Reading from the N-terminus, the 257-residue chain is Pyridoxine 5'-phosphate synthase (257 aa).

A 3-amino-2-oxopropyl phosphate-binding site is contributed by Asn-16. 18–19 (DH) serves as a coordination point for 1-deoxy-D-xylulose 5-phosphate. Arg-27 lines the 3-amino-2-oxopropyl phosphate pocket. The Proton acceptor role is filled by His-52. 1-deoxy-D-xylulose 5-phosphate-binding residues include Arg-54 and His-59. Residue Glu-79 is the Proton acceptor of the active site. 1-deoxy-D-xylulose 5-phosphate is bound at residue Thr-109. The Proton donor role is filled by His-200. 3-amino-2-oxopropyl phosphate contacts are provided by residues Gly-201 and 222–223 (GH).

This sequence belongs to the PNP synthase family. As to quaternary structure, homooctamer; tetramer of dimers.

The protein localises to the cytoplasm. The enzyme catalyses 3-amino-2-oxopropyl phosphate + 1-deoxy-D-xylulose 5-phosphate = pyridoxine 5'-phosphate + phosphate + 2 H2O + H(+). It functions in the pathway cofactor biosynthesis; pyridoxine 5'-phosphate biosynthesis; pyridoxine 5'-phosphate from D-erythrose 4-phosphate: step 5/5. In terms of biological role, catalyzes the complicated ring closure reaction between the two acyclic compounds 1-deoxy-D-xylulose-5-phosphate (DXP) and 3-amino-2-oxopropyl phosphate (1-amino-acetone-3-phosphate or AAP) to form pyridoxine 5'-phosphate (PNP) and inorganic phosphate. This Burkholderia pseudomallei (strain 1710b) protein is Pyridoxine 5'-phosphate synthase.